The sequence spans 116 residues: Large ribosomal subunit protein uL18 (116 aa).

The protein belongs to the universal ribosomal protein uL18 family. As to quaternary structure, part of the 50S ribosomal subunit; part of the 5S rRNA/L5/L18/L25 subcomplex. Contacts the 5S and 23S rRNAs.

Functionally, this is one of the proteins that bind and probably mediate the attachment of the 5S RNA into the large ribosomal subunit, where it forms part of the central protuberance. In Shewanella amazonensis (strain ATCC BAA-1098 / SB2B), this protein is Large ribosomal subunit protein uL18.